The sequence spans 1902 residues: Plexin-B3 (1902 aa).

Positions methionine 1–alanine 34 are cleaved as a signal peptide. In terms of domain architecture, Sema spans histidine 35 to valine 461. Residues histidine 35 to glutamine 1245 lie on the Extracellular side of the membrane. N-linked (GlcNAc...) asparagine glycosylation is present at asparagine 41. Cystine bridges form between cysteine 88/cysteine 97 and cysteine 122/cysteine 130. An N-linked (GlcNAc...) asparagine glycan is attached at asparagine 221. 3 disulfide bridges follow: cysteine 257–cysteine 360, cysteine 273–cysteine 305, and cysteine 323–cysteine 347. Residues aspartate 353–arginine 372 form a disordered region. 2 N-linked (GlcNAc...) asparagine glycosylation sites follow: asparagine 416 and asparagine 469. One can recognise a PSI 1 domain in the interval alanine 463–leucine 515. Intrachain disulfides connect cysteine 464/cysteine 481, cysteine 470/cysteine 514, cysteine 473/cysteine 490, cysteine 484/cysteine 496, and cysteine 551/cysteine 569. PSI domains lie at aspartate 609–proline 671 and aspartate 776–proline 822. 5 N-linked (GlcNAc...) asparagine glycosylation sites follow: asparagine 791, asparagine 889, asparagine 946, asparagine 1090, and asparagine 1207. 3 consecutive IPT/TIG domains span residues proline 824 to tyrosine 913, aspartate 915 to threonine 1001, and asparagine 1003 to glutamine 1134. A helical membrane pass occupies residues valine 1246–tyrosine 1266. Topologically, residues arginine 1267 to leucine 1902 are cytoplasmic.

This sequence belongs to the plexin family. Binds MET and MST1R. Interacts with RIT2/RIN. Interacts (via cytoplasmic domain) with FSCN1 and RAC1. May form homodimers (via Sema domain). Interacts (via cytoplasmic domain) with ARHGDIA. As to expression, expressed in glioma cells (at protein level). Expressed in glioma cells and oligodendrocyte precursor cells.

It localises to the cell membrane. In terms of biological role, receptor for SEMA5A that plays a role in axon guidance, invasive growth and cell migration. Stimulates neurite outgrowth and mediates Ca(2+)/Mg(2+)-dependent cell aggregation. In glioma cells, SEMA5A stimulation of PLXNB3 results in the disassembly of F-actin stress fibers, disruption of focal adhesions and cellular collapse as well as inhibition of cell migration and invasion through ARHGDIA-mediated inactivation of RAC1. This is Plexin-B3 (Plxnb3) from Rattus norvegicus (Rat).